We begin with the raw amino-acid sequence, 800 residues long: MFISKEWLESYVEINEQVNVLAERITRTGIEVDDIIDYTKEIKNLVVGYVQSIAAHPDADKLNICQVDIGEAEPVQIVCGAPNVDAGQTVIVASVGGRLPGGVKIKRAKLRGEHSEGMICSLQEVGVPSNLVPKQFEDGIFVFSTEVKPGTDALDALYLNDQVMEFDLTPNRADALSMIGTAYETAALYNVPMTKPETQSTETSDQTNDEISVNIQNEDKVPYYSARVVKNVTIAPSPEWMQMRLIKAGIRPINNVVDISNYVLIEYGQPLHMFDQDQIGSKHIEVRQAKADEEMTTLDNQERQLKENDIVITNGETPIAIAGVMGGDFSEVTEATKHVVIEGAIFDPVSIRHTSRRLNLRSEASSRFEKGIATEFVDEAVDRACYLLQTYAGGSVAQGRVSQGELGCFVTPIDISVSKVNQTIGFELSAEDIESIFVQLGFETTKNKDVLTVMVPSRRKDISIKEDLIEEIARIYGYDKIPSTLPVFDQVTHGALTDRQSKSRIIKATLEGAGLNQAINYSLVDKDRAKDFALQERETIDLLMPMSEAHSTLRQSLIPHLIDAVAYNVARKNSDVRLYELGSVFFANGEDELPDEVEYLSGILTGDYTVNHWQSKKETIDFFVAKGIVDRIAEKLDIQFEYEAGEINGLHPGRTAYVELNGEIVGFVGELHPKTEKDYDLKRTYVFELNFDKLMSVSVGYINYQAIPRFPGVSRDIALVVNRATPSAKLVNIIHEHGGNILQEAEVFDVYEGEHMAEDEKSIAIRLAYLDTEQTLTDDKVNAVHEAILEALKSEGATIR.

A tRNA-binding domain is found at 39–154 (TKEIKNLVVG…TEVKPGTDAL (116 aa)). The B5 domain occupies 408–483 (CFVTPIDISV…RIYGYDKIPS (76 aa)). Mg(2+) contacts are provided by Asp-461, Asp-467, Glu-470, and Glu-471. One can recognise an FDX-ACB domain in the interval 708-800 (PRFPGVSRDI…ALKSEGATIR (93 aa)).

This sequence belongs to the phenylalanyl-tRNA synthetase beta subunit family. Type 1 subfamily. Tetramer of two alpha and two beta subunits. Mg(2+) is required as a cofactor.

It localises to the cytoplasm. It catalyses the reaction tRNA(Phe) + L-phenylalanine + ATP = L-phenylalanyl-tRNA(Phe) + AMP + diphosphate + H(+). The protein is Phenylalanine--tRNA ligase beta subunit of Staphylococcus saprophyticus subsp. saprophyticus (strain ATCC 15305 / DSM 20229 / NCIMB 8711 / NCTC 7292 / S-41).